The chain runs to 302 residues: Large ribosomal subunit protein uL4m (302 aa).

It belongs to the universal ribosomal protein uL4 family. In terms of assembly, component of the mitochondrial ribosome large subunit (39S) which comprises a 16S rRNA and about 50 distinct proteins.

The protein resides in the mitochondrion. This Danio rerio (Zebrafish) protein is Large ribosomal subunit protein uL4m (mrpl4).